Consider the following 253-residue polypeptide: 3-dehydroquinate dehydratase (253 aa).

3-dehydroquinate contacts are provided by residues 46-48 (EWR) and Arg-82. His-143 functions as the Proton donor/acceptor in the catalytic mechanism. Lys-170 serves as the catalytic Schiff-base intermediate with substrate. 3-dehydroquinate contacts are provided by Arg-213, Ser-232, and Gln-236.

Belongs to the type-I 3-dehydroquinase family. In terms of assembly, homodimer.

It catalyses the reaction 3-dehydroquinate = 3-dehydroshikimate + H2O. It functions in the pathway metabolic intermediate biosynthesis; chorismate biosynthesis; chorismate from D-erythrose 4-phosphate and phosphoenolpyruvate: step 3/7. Its function is as follows. Involved in the third step of the chorismate pathway, which leads to the biosynthesis of aromatic amino acids. Catalyzes the cis-dehydration of 3-dehydroquinate (DHQ) and introduces the first double bond of the aromatic ring to yield 3-dehydroshikimate. The sequence is that of 3-dehydroquinate dehydratase from Bacillus velezensis (strain DSM 23117 / BGSC 10A6 / LMG 26770 / FZB42) (Bacillus amyloliquefaciens subsp. plantarum).